A 183-amino-acid chain; its full sequence is MSRKARDPIVLPQGVEVSIQNDEISVKGPKGSLTQVLAKEVEIAVKGNEVFVTPAAHVVDRPGRIQGLYWALIANMVKGVHTGFEKRLEMIGVGFRAAVQGSLLDLSIGVSHPTKMPIPTGLEVSVEKNTLISIKGINKQLVGEFATCVRAKRPPEPYKGKGIRYENEYVRRKAGKAAKTGKK.

Belongs to the universal ribosomal protein uL6 family. Part of the 50S ribosomal subunit.

Functionally, this protein binds to the 23S rRNA, and is important in its secondary structure. It is located near the subunit interface in the base of the L7/L12 stalk, and near the tRNA binding site of the peptidyltransferase center. This Chlamydia trachomatis serovar A (strain ATCC VR-571B / DSM 19440 / HAR-13) protein is Large ribosomal subunit protein uL6.